Consider the following 91-residue polypeptide: Acylphosphatase (91 aa).

Positions 3-91 (KLRMNVQGRV…EETEQFKVIQ (89 aa)) constitute an Acylphosphatase-like domain. Catalysis depends on residues R18 and N36.

This sequence belongs to the acylphosphatase family.

The enzyme catalyses an acyl phosphate + H2O = a carboxylate + phosphate + H(+). In Enterococcus faecalis (strain ATCC 700802 / V583), this protein is Acylphosphatase (acyP).